The primary structure comprises 447 residues: Gastrin/cholecystokinin type B receptor (447 aa).

Residues 1 to 57 (MELLKLNRSVQGTGPGPGASLCRPGAPLLNSSSVGNLSCEPPRIRGAGTRELELAIR) are Extracellular-facing. N-linked (GlcNAc...) asparagine glycosylation is found at Asn7, Asn30, and Asn36. The helical transmembrane segment at 58-79 (ITLYAVIFLMSVGGNMLIIVVL) threads the bilayer. The Cytoplasmic portion of the chain corresponds to 80 to 87 (GLSRRLRT). A helical transmembrane segment spans residues 88 to 109 (VTNAFLLSLAVSDLLLAVACMP). The Extracellular portion of the chain corresponds to 110 to 131 (FTLLPNLMGTFIFGTVICKAVS). Cys127 and Cys205 are oxidised to a cystine. The helical transmembrane segment at 132–150 (YLMGVSVSVSTLSLVAIAL) threads the bilayer. The Cytoplasmic segment spans residues 151–170 (ERYSAICRPLQARVWQTRSH). The chain crosses the membrane as a helical span at residues 171–189 (AARVIVATWLLSGLLMVPY). Residues 190-219 (PVYTVVQPVGPRVLQCVHRWPSARVRQTWS) lie on the Extracellular side of the membrane. The chain crosses the membrane as a helical span at residues 220–242 (VLLLLLLFFIPGVVMAVAYGLIS). Topologically, residues 243-333 (RELYLGLRFD…KLLAKKRVVR (91 aa)) are cytoplasmic. The disordered stretch occupies residues 258-285 (DSQSRVRNQGGLPGAVHQNGRCRPETGA). The chain crosses the membrane as a helical span at residues 334 to 355 (MLLVIVVLFFLCWLPVYSANTW). Residues 356 to 373 (RAFDGPGAHRALSGAPIS) are Extracellular-facing. The helical transmembrane segment at 374–394 (FIHLLSYASACVNPLVYCFMH) threads the bilayer. Residues 395–447 (RRFRQACLETCARCCPRPPRARPRALPDEDPPTPSIASLSRLSYTTISTLGPG) lie on the Cytoplasmic side of the membrane. Cys408 carries S-palmitoyl cysteine lipidation.

This sequence belongs to the G-protein coupled receptor 1 family. Isoform 1 is expressed in brain, pancreas, stomach, the colon cancer cell line LoVo and the T-lymphoblastoma Jurkat, but not in heart, placenta, liver, lung, skeletal muscle, kidney or the stomach cancer cell line AGS. Expressed at high levels in the small cell lung cancer cell line NCI-H510, at lower levels in NCI-H345, NCI-H69 and GLC-28 cell lines, not expressed in GLC-19 cell line. Within the stomach, expressed at high levels in the mucosa of the gastric fundus and at low levels in the antrum and duodenum. Isoform 2 is present in pancreatic cancer cells and colorectal cancer cells, but not in normal pancreas or colonic mucosa. Isoform 3 is expressed in brain, pancreas, stomach, the stomach cancer cell line AGS and the colon cancer cell line LoVo.

The protein resides in the cell membrane. Its function is as follows. Receptor for gastrin and cholecystokinin. The CCK-B receptors occur throughout the central nervous system where they modulate anxiety, analgesia, arousal, and neuroleptic activity. This receptor mediates its action by association with G proteins that activate a phosphatidylinositol-calcium second messenger system. Functionally, isoform 2 is constitutively activated and may regulate cancer cell proliferation via a gastrin-independent mechanism. This chain is Gastrin/cholecystokinin type B receptor, found in Homo sapiens (Human).